The chain runs to 155 residues: RxLR effector protein 24 (155 aa).

Residues 1–21 (MRLLIWVLFVTLVTFVSNTTA) form the signal peptide. The RxLR-dEER signature appears at 52–78 (RFLRTESKNDLKSDADTNGIDIEDEER). The RABA-binding domain stretch occupies residues 105 to 155 (EKAFQRMNQKGETPTTLAKRLDIGKTAEKRFEKTYEKYTAWWINHHTNAGT).

The protein belongs to the RxLR effector family. Interacts with Arabidopsis thaliana RABA GTPases including RABA1a, RABA1b, RABA1c, RABA1d, RABA1f, RABA2a, RABA2c, RABA2d, RABA4a, RABA4b and RABA4c.

The protein localises to the secreted. The protein resides in the host cell membrane. Its subcellular location is the host endomembrane system. Effector protein that contributes to pathogen virulence. Targets members of the RABA GTPases subfamily to inhibit vesicular secretion, leading to an accumulation of secretory proteins in the endoplasmic reticulum. The protein is RxLR effector protein 24 of Phytophthora brassicae.